Reading from the N-terminus, the 409-residue chain is F-box protein At3g17320 (409 aa).

The F-box domain occupies 1–47 (MTKISDLPRDLAEEVLSRVPVTYLRAIRFTCKKWNTLTKRRSFTKKL).

This chain is F-box protein At3g17320, found in Arabidopsis thaliana (Mouse-ear cress).